We begin with the raw amino-acid sequence, 620 residues long: Cilia- and flagella-associated protein 52 (620 aa).

12 WD repeats span residues 62-106, 109-150, 156-195, 203-242, 288-327, 330-369, 372-411, 415-454, 459-498, 500-539, 543-582, and 585-620; these read GHSN…LMAR, LHKG…AICG, LNVG…RKIW, QMKR…LADT, QLQG…ETLV, CHFE…ELLR, VPNM…LMYV, AHRI…QKLE, EHKS…RNQM, LANT…GIRE, SLSG…VTHV, and GHSG…PFPS.

Belongs to the CFAP52 family. In terms of assembly, microtubule inner protein component of sperm flagellar doublet microtubules. Interacts with BRCA2. Interacts with the CCT chaperonin complex. Interacts with HSP70. Interacts with AK8. Interacts with CFAP45. Interacts with DNAI1. Interacts with IQDC. As to expression, expressed in respiratory cells and sperm (at protein level).

Its subcellular location is the cytoplasm. It is found in the cytoskeleton. The protein resides in the cilium axoneme. It localises to the flagellum axoneme. Functionally, microtubule inner protein (MIP) part of the dynein-decorated doublet microtubules (DMTs) in cilia axoneme. Important for proper ciliary and flagellar beating. May act in cooperation with CFAP45 and axonemal dynein subunit DNAH11. May play a role in cell growth and/or survival. The polypeptide is Cilia- and flagella-associated protein 52 (CFAP52) (Sus scrofa (Pig)).